The sequence spans 394 residues: Growth-regulating factor 4 (394 aa).

The QLQ domain occupies 64–99 (PFTAAQYEELEQQALIYKYLVAGVPVPPDLVLPIRR). One can recognise a WRC domain in the interval 125-169 (DPEPGRCRRTDGKKWRCSKEAAPDSKYCERHMHRGRNRSRKPVET). 2 consecutive short sequence motifs (bipartite nuclear localization signal) follow at residues 130–140 (RCRRTDGKKWR) and 158–165 (RGRNRSRK). A disordered region spans residues 156–180 (MHRGRNRSRKPVETQLVAQSQPPSS). Residues 170-180 (QLVAQSQPPSS) are compositionally biased toward low complexity.

Belongs to the GRF family. Interacts with GIF1. Interacts with GSK2. In terms of tissue distribution, expressed in stems. Expressed in panicles.

The protein localises to the nucleus. Transactivation activity is repressed by GSK2. Its function is as follows. Transcription activator that plays a role in the regulation of meristematic function in leaves, stems and inflorescences. Transcription activator that plays a regulatory role in grain development. Positively regulates grain size by promoting cell division and expansion, leading to increased grain length and width. Positively regulates the expression of genes promoting cell proliferation. Activates the expression of expansin genes to promote cell expansion and grain size. May promote grain size by activating brassinosteroid responses. Component of a network formed by the microRNA396 (miRNA396), the GRFs and their interacting factors (GIFs) acting in the regulation of meristem function, at least partially through the control of cell proliferation. Component of the miRNA396c-GRF4-GIF1 regulatory module that plays an important role in grain size determination. This chain is Growth-regulating factor 4, found in Oryza sativa subsp. japonica (Rice).